The chain runs to 321 residues: uncharacterized protein (321 aa).

The Proton donor role is filled by Tyr-60. His-118 contributes to the substrate binding site.

It belongs to the aldo/keto reductase family.

This is an uncharacterized protein from Schizosaccharomyces pombe (strain 972 / ATCC 24843) (Fission yeast).